Reading from the N-terminus, the 469-residue chain is Uronate isomerase (469 aa).

It belongs to the metallo-dependent hydrolases superfamily. Uronate isomerase family.

The enzyme catalyses D-glucuronate = D-fructuronate. It carries out the reaction aldehydo-D-galacturonate = keto-D-tagaturonate. Its pathway is carbohydrate metabolism; pentose and glucuronate interconversion. The chain is Uronate isomerase from Rhizobium meliloti (strain 1021) (Ensifer meliloti).